The following is a 177-amino-acid chain: Transcription factor E (177 aa).

In terms of domain architecture, HTH TFE/IIEalpha-type spans 9-91; that stretch reads VEELLNELVG…YWRINYDKAL (83 aa).

Belongs to the TFE family. Monomer. Interaction with RNA polymerase subunits RpoF and RpoE is necessary for Tfe stimulatory transcription activity. Able to interact with Tbp and RNA polymerase in the absence of DNA promoter. Interacts both with the preinitiation and elongation complexes.

Transcription factor that plays a role in the activation of archaeal genes transcribed by RNA polymerase. Facilitates transcription initiation by enhancing TATA-box recognition by TATA-box-binding protein (Tbp), and transcription factor B (Tfb) and RNA polymerase recruitment. Not absolutely required for transcription in vitro, but particularly important in cases where Tbp or Tfb function is not optimal. It dynamically alters the nucleic acid-binding properties of RNA polymerases by stabilizing the initiation complex and destabilizing elongation complexes. Seems to translocate with the RNA polymerase following initiation and acts by binding to the non template strand of the transcription bubble in elongation complexes. The sequence is that of Transcription factor E from Archaeoglobus fulgidus (strain ATCC 49558 / DSM 4304 / JCM 9628 / NBRC 100126 / VC-16).